Consider the following 341-residue polypeptide: Nicotinate-nucleotide--dimethylbenzimidazole phosphoribosyltransferase (341 aa).

Glutamate 306 serves as the catalytic Proton acceptor.

The protein belongs to the CobT family.

The catalysed reaction is 5,6-dimethylbenzimidazole + nicotinate beta-D-ribonucleotide = alpha-ribazole 5'-phosphate + nicotinate + H(+). The protein operates within nucleoside biosynthesis; alpha-ribazole biosynthesis; alpha-ribazole from 5,6-dimethylbenzimidazole: step 1/2. Functionally, catalyzes the synthesis of alpha-ribazole-5'-phosphate from nicotinate mononucleotide (NAMN) and 5,6-dimethylbenzimidazole (DMB). This Methylocella silvestris (strain DSM 15510 / CIP 108128 / LMG 27833 / NCIMB 13906 / BL2) protein is Nicotinate-nucleotide--dimethylbenzimidazole phosphoribosyltransferase.